The primary structure comprises 186 residues: MENNKKKLILLDLDNTLICAEDLDTVKDKKRLSQAQKQFRTVRMEDYYDIFERPHLQEFLDYLFKNFKVGVWTASSKDYAIFVIKNFITAPQNKVKPDRKIEIFLCSHHCNVSKKYFKGISKDLKLVTDQWKIIDLSQVKLVDDLEKLANHQPENVIHVKPFFYDEPNSKNDTELLKVQKTLETFK.

The 181-residue stretch at 2-182 (ENNKKKLILL…TELLKVQKTL (181 aa)) folds into the FCP1 homology domain.

It belongs to the IIV-6 355R family.

Functionally, may function as a phosphatase. In Aedes vexans (Inland floodwater mosquito), this protein is Putative CTD phosphatase-like protein 355R.